The following is a 517-amino-acid chain: Ribonuclease Y (517 aa).

The chain crosses the membrane as a helical span at residues 1 to 21 (MIEFLIGLIAAVVGILVGYLI). Residues 207–271 (LINVVNIKND…IAVRTVELLV (65 aa)) form the KH domain. Residues 333 to 426 (ALIHSLEVAH…VCTADVLSAA (94 aa)) enclose the HD domain.

Belongs to the RNase Y family.

The protein resides in the cell membrane. Functionally, endoribonuclease that initiates mRNA decay. This Campylobacter hominis (strain ATCC BAA-381 / DSM 21671 / CCUG 45161 / LMG 19568 / NCTC 13146 / CH001A) protein is Ribonuclease Y.